The following is a 230-amino-acid chain: Enolase-phosphatase E1 (230 aa).

It belongs to the HAD-like hydrolase superfamily. MasA/MtnC family. As to quaternary structure, monomer. Mg(2+) is required as a cofactor.

The enzyme catalyses 5-methylsulfanyl-2,3-dioxopentyl phosphate + H2O = 1,2-dihydroxy-5-(methylsulfanyl)pent-1-en-3-one + phosphate. The protein operates within amino-acid biosynthesis; L-methionine biosynthesis via salvage pathway; L-methionine from S-methyl-5-thio-alpha-D-ribose 1-phosphate: step 3/6. It participates in amino-acid biosynthesis; L-methionine biosynthesis via salvage pathway; L-methionine from S-methyl-5-thio-alpha-D-ribose 1-phosphate: step 4/6. Functionally, bifunctional enzyme that catalyzes the enolization of 2,3-diketo-5-methylthiopentyl-1-phosphate (DK-MTP-1-P) into the intermediate 2-hydroxy-3-keto-5-methylthiopentenyl-1-phosphate (HK-MTPenyl-1-P), which is then dephosphorylated to form the acireductone 1,2-dihydroxy-3-keto-5-methylthiopentene (DHK-MTPene). This is Enolase-phosphatase E1 from Marinobacter nauticus (strain ATCC 700491 / DSM 11845 / VT8) (Marinobacter aquaeolei).